The following is a 299-amino-acid chain: MVATDLKNNKNIAILGSGNLGVSIARGIVASGHYKSNQIVLTRRTLEKIQHLKDEEGFQITSDNLEAANKCAILIIGVLPAQVPQLLESIKHLVTKDHIIISVVLGITISGIRSHLQPDVYTPIVRAMPNTAIQYCESMTCIANKSDHPTKSGTAEQELADQNALEVTEKIFNCCGECITISEEAMVSAPALCSCGTAFFCRIIRAAASAGCEIGFHAEDAVRIAAQTAKGAAIMLLKNDSHPESEIDRITTPSGATIAGLNTMEHNGLSSAIIKGIVMSAEKSSKSQAALNKLNNVSS.

This sequence belongs to the pyrroline-5-carboxylate reductase family. Homodecamer; composed of 5 homodimers.

The enzyme catalyses L-proline + NADP(+) = (S)-1-pyrroline-5-carboxylate + NADPH + 2 H(+). It catalyses the reaction L-proline + NAD(+) = (S)-1-pyrroline-5-carboxylate + NADH + 2 H(+). Its pathway is amino-acid biosynthesis; L-proline biosynthesis; L-proline from L-glutamate 5-semialdehyde: step 1/1. This Dictyostelium discoideum (Social amoeba) protein is Pyrroline-5-carboxylate reductase 2 (pycr2).